The sequence spans 637 residues: MGKIIGIDLGTTNSCVAVMQGSQPTVIENSEGNRTTPSVVGFTKTGDRLVGQAAKRQAITNPKNTIFSIKRFMGRRFDEVGEEKKMAPYELINDSGEARVKINDKVYSPQEISAMVLQKMKQTAEDFLGEKVTEAVITVPAYFNDAQRQATKDAGRIAGLEVKRIINEPTAAALAYGLDKKNASEKVAVFDLGGGTFDISILELGEGVFEVKSTDGDTHLGGDDFDQKIIDYIAEEFKKQEGIDLRKDAITLQRLKEAAEKAKIELSSRSDTEINLPFITATQEGPKHLVINLTRAKFEAISADLFNKVLDPCRRAVKNAKIEMREIDEVVLVGGSTRIPKIQALVKEFFGKEPNKSVNPDEVVAIGAAIQGGVLKGDVTDVLLLDVTPLSLGIETLGGVMTKLIEANTTIPTKKQEVFSTASDNQTSVEVHVLQGERPMAADNKTLGRFHLGDIPPAPRGIPQVEVIFDIDANGILHVSAKDKATGKEQSIRIEASSKLSDAEINKMKDDAKQHADEDKKRKEEIDIKNSADALIFSTEKQLTELGEKIPTDKKSALEGSLDKLRDAYKNGTTESIKSAMDDLNSQWNSIASDLYQSGAGAAQAQPEAPQNSGSSQSSGGDGAVNAEYEVINDDKK.

A Phosphothreonine; by autocatalysis modification is found at T196. 2 disordered regions span residues 503–525 (AEIN…RKEE) and 598–637 (SGAG…DDKK). Over residues 598–619 (SGAGAAQAQPEAPQNSGSSQSS) the composition is skewed to low complexity.

This sequence belongs to the heat shock protein 70 family.

Acts as a chaperone. The polypeptide is Chaperone protein DnaK (Chlorobium chlorochromatii (strain CaD3)).